The chain runs to 328 residues: Ferredoxin--NADP reductase 2 (328 aa).

8 residues coordinate FAD: T16, E35, Q43, Y48, I88, F123, D284, and T325.

Belongs to the ferredoxin--NADP reductase type 2 family. In terms of assembly, homodimer. Requires FAD as cofactor.

It catalyses the reaction 2 reduced [2Fe-2S]-[ferredoxin] + NADP(+) + H(+) = 2 oxidized [2Fe-2S]-[ferredoxin] + NADPH. This Oceanobacillus iheyensis (strain DSM 14371 / CIP 107618 / JCM 11309 / KCTC 3954 / HTE831) protein is Ferredoxin--NADP reductase 2.